A 244-amino-acid chain; its full sequence is 7-cyano-7-deazaguanine synthase (244 aa).

14-24 (FSGGQDSATCV) is an ATP binding site. 4 residues coordinate Zn(2+): cysteine 202, cysteine 217, cysteine 220, and cysteine 223.

The protein belongs to the QueC family. Zn(2+) serves as cofactor.

It carries out the reaction 7-carboxy-7-deazaguanine + NH4(+) + ATP = 7-cyano-7-deazaguanine + ADP + phosphate + H2O + H(+). It functions in the pathway purine metabolism; 7-cyano-7-deazaguanine biosynthesis. Catalyzes the ATP-dependent conversion of 7-carboxy-7-deazaguanine (CDG) to 7-cyano-7-deazaguanine (preQ(0)). The chain is 7-cyano-7-deazaguanine synthase from Burkholderia cenocepacia (strain ATCC BAA-245 / DSM 16553 / LMG 16656 / NCTC 13227 / J2315 / CF5610) (Burkholderia cepacia (strain J2315)).